Consider the following 263-residue polypeptide: Glutathione S-transferase F8, chloroplastic (263 aa).

A chloroplast-targeting transit peptide spans 1-49 (MGAIQARLPLFLSPPSIKHHTFLHSSSSNSNFKIRSNKSSSSSSSSIIM). One can recognise a GST N-terminal domain in the interval 50–131 (ASIKVHGVPM…YLAEEYSEKG (82 aa)). Glutathione contacts are provided by residues 60 to 61 (ST), 89 to 90 (HK), 102 to 103 (QI), and 115 to 116 (ES). Residues 139–263 (CKKVKATTNV…WAKVIDLQKQ (125 aa)) enclose the GST C-terminal domain. Phosphothreonine is present on T177.

It belongs to the GST superfamily. Phi family. Isoform 1 is predominantly expressed in leaves and isoform 2 in roots.

The protein resides in the plastid. It localises to the chloroplast. It is found in the cytoplasm. Its subcellular location is the cytosol. It carries out the reaction RX + glutathione = an S-substituted glutathione + a halide anion + H(+). In terms of biological role, in vitro, possesses glutathione S-transferase activity toward 1-chloro-2,4-dinitrobenzene (CDNB) and glutathione peroxidase activity toward cumene hydroperoxide and linoleic acid-13-hydroperoxide. May be involved in the conjugation of reduced glutathione to a wide number of exogenous and endogenous hydrophobic electrophiles and have a detoxification role against certain herbicides. This chain is Glutathione S-transferase F8, chloroplastic (GSTF8), found in Arabidopsis thaliana (Mouse-ear cress).